The primary structure comprises 160 residues: Ureidoglycolate lyase (160 aa).

This sequence belongs to the ureidoglycolate lyase family. As to quaternary structure, homodimer. Ni(2+) serves as cofactor.

The catalysed reaction is (S)-ureidoglycolate = urea + glyoxylate. Its pathway is nitrogen metabolism; (S)-allantoin degradation. Catalyzes the catabolism of the allantoin degradation intermediate (S)-ureidoglycolate, generating urea and glyoxylate. Involved in the anaerobic utilization of allantoin as sole nitrogen source. Reinforces the induction of genes involved in the degradation of allantoin and glyoxylate by producing glyoxylate. This is Ureidoglycolate lyase from Escherichia coli O6:H1 (strain CFT073 / ATCC 700928 / UPEC).